A 251-amino-acid chain; its full sequence is 3-dehydroquinate dehydratase (251 aa).

Residues 47 to 49 and arginine 83 each bind 3-dehydroquinate; that span reads EWR. Histidine 144 acts as the Proton donor/acceptor in catalysis. Lysine 171 serves as the catalytic Schiff-base intermediate with substrate. Residues arginine 214, serine 233, and glutamine 237 each coordinate 3-dehydroquinate.

The protein belongs to the type-I 3-dehydroquinase family. In terms of assembly, homodimer.

It catalyses the reaction 3-dehydroquinate = 3-dehydroshikimate + H2O. Its pathway is metabolic intermediate biosynthesis; chorismate biosynthesis; chorismate from D-erythrose 4-phosphate and phosphoenolpyruvate: step 3/7. Its function is as follows. Involved in the third step of the chorismate pathway, which leads to the biosynthesis of aromatic amino acids. Catalyzes the cis-dehydration of 3-dehydroquinate (DHQ) and introduces the first double bond of the aromatic ring to yield 3-dehydroshikimate. This chain is 3-dehydroquinate dehydratase, found in Klebsiella pneumoniae subsp. pneumoniae (strain ATCC 700721 / MGH 78578).